A 298-amino-acid chain; its full sequence is HTH-type transcriptional regulator CzcR (298 aa).

The HTH lysR-type domain occupies 11 to 68; the sequence is MELRDLQIFQSVADQGSVSSAAKELNYVQSNVTARIKQLENELKTPLFYRHKRGMTLT. Residues 28-47 constitute a DNA-binding region (H-T-H motif); that stretch reads VSSAAKELNYVQSNVTARIK.

This sequence belongs to the LysR transcriptional regulatory family.

This is HTH-type transcriptional regulator CzcR (czcR) from Bacillus thuringiensis (strain Al Hakam).